A 572-amino-acid polypeptide reads, in one-letter code: Urease subunit alpha (572 aa).

Residues 133–572 (GGIDLHVHYI…TSLSQRYFLF (440 aa)) form the Urease domain. 3 residues coordinate Ni(2+): H138, H140, and K221. K221 is modified (N6-carboxylysine). H223 contributes to the substrate binding site. Ni(2+) contacts are provided by H250 and H276. The active-site Proton donor is H324. D364 serves as a coordination point for Ni(2+).

Belongs to the metallo-dependent hydrolases superfamily. Urease alpha subunit family. As to quaternary structure, heterotrimer of UreA (gamma), UreB (beta) and UreC (alpha) subunits. Three heterotrimers associate to form the active enzyme. Ni cation is required as a cofactor. Post-translationally, carboxylation allows a single lysine to coordinate two nickel ions.

It localises to the cytoplasm. It carries out the reaction urea + 2 H2O + H(+) = hydrogencarbonate + 2 NH4(+). Its pathway is nitrogen metabolism; urea degradation; CO(2) and NH(3) from urea (urease route): step 1/1. The protein is Urease subunit alpha of Streptococcus thermophilus (strain CNRZ 1066).